The following is a 419-amino-acid chain: Zinc metalloproteinase-disintegrin-like atrolysin-A (419 aa).

Positions R6–P202 constitute a Peptidase M12B domain. Position 9 (E9) interacts with Ca(2+). N72 carries an N-linked (GlcNAc...) asparagine glycan. D93 is a binding site for Ca(2+). 3 cysteine pairs are disulfide-bonded: C117–C197, C157–C181, and C159–C164. H142 is a binding site for Zn(2+). E143 is an active-site residue. Zn(2+) is bound by residues H146 and H152. 8 residues coordinate Ca(2+): C197, N200, V212, N215, L217, E219, E222, and D225. In terms of domain architecture, Disintegrin spans P210–N296. 14 disulfides stabilise this stretch: C213–C242, C224–C237, C226–C232, C236–C259, C250–C256, C255–C281, C268–C288, C275–C307, C300–C312, C319–C369, C334–C376, C347–C357, C364–C398, and C392–C403. The D/ECD-tripeptide motif lies at E274–D276. N-linked (GlcNAc...) asparagine glycosylation is found at N326, N338, and N342.

This sequence belongs to the venom metalloproteinase (M12B) family. P-III subfamily. P-IIIa sub-subfamily. As to quaternary structure, monomer. Requires Zn(2+) as cofactor. Expressed by the venom gland.

It localises to the secreted. It catalyses the reaction Cleavage of 3-Asn-|-Gln-4, 5-His-|-Leu-6, 10-His-|-Leu-11, 14-Ala-|-Leu-15 and 16-Tyr-|-Leu-17 in insulin B chain. Removes C-terminal Leu from small peptides.. Its function is as follows. Snake venom zinc metalloproteinase-disintegrin that causes hemorrhage by provoking the degradation of the sub-endothelial matrix proteins (fibronectin, laminin, type IV collagen, nidogen, and gelatins) and disturbances in platelet function. The recombinant cysteine-rich domain interacts with the alpha-2/beta-1 integrin (ITGA2/ITGB1) (collagen receptor), and inhibits the platelet aggregation induced by collagen. This chain is Zinc metalloproteinase-disintegrin-like atrolysin-A, found in Crotalus atrox (Western diamondback rattlesnake).